Here is a 57-residue protein sequence, read N- to C-terminus: Small ribosomal subunit protein bS21 (57 aa).

It belongs to the bacterial ribosomal protein bS21 family.

This chain is Small ribosomal subunit protein bS21, found in Bacillus anthracis (strain A0248).